The sequence spans 233 residues: Defense protein 3 (233 aa).

An N-terminal signal peptide occupies residues 1-17 (MFGKFVLLAVLLVGVNS). The propeptide occupies 18-45 (RYVIIEDPVYYIEDHELPEQWTSSRVRR).

This sequence belongs to the attacin/sarcotoxin-2 family.

It is found in the secreted. Has antibacterial activity against both Gram-positive and Gram-negative bacteria. This Lonomia obliqua (Moth) protein is Defense protein 3.